The chain runs to 510 residues: Protein phosphatase EYA3 (510 aa).

2 disordered regions span residues 1–32 (MQEP…SNLS) and 175–233 (YQTE…DASS). Positions 7 to 16 (QTLSQVNNPD) are enriched in polar residues. Residues 192-203 (LPSDSSASPPLS) show a composition bias toward low complexity. Phosphoserine occurs at positions 199 and 203. The active-site Nucleophile is the Asp-246. Mg(2+) is bound by residues Asp-246 and Asp-248. Residue Asp-248 is the Proton donor of the active site. A phosphoserine mark is found at Ser-375 and Ser-409. Asp-474 serves as a coordination point for Mg(2+).

This sequence belongs to the HAD-like hydrolase superfamily. EYA family. In terms of assembly, interacts with SIX1 and DACH1, and probably SIX2, SIX4 and SIX5. The cofactor is Mg(2+). Post-translationally, ser-203 phosphorylation is required for localization at sites of DNA damage and directing interaction with H2AX. As to expression, expressed in branchial arches, CNS and developing eye.

The protein resides in the cytoplasm. Its subcellular location is the nucleus. It catalyses the reaction O-phospho-L-tyrosyl-[protein] + H2O = L-tyrosyl-[protein] + phosphate. Tyrosine phosphatase that specifically dephosphorylates 'Tyr-142' of histone H2AX (H2AXY142ph). 'Tyr-142' phosphorylation of histone H2AX plays a central role in DNA repair and acts as a mark that distinguishes between apoptotic and repair responses to genotoxic stress. Promotes efficient DNA repair by dephosphorylating H2AX, promoting the recruitment of DNA repair complexes containing MDC1. Its function as histone phosphatase probably explains its role in transcription regulation during organogenesis. The phosphatase activity has been shown in vitro. Coactivates SIX1. Seems to coactivate SIX2, SIX4 and SIX5. The repression of precursor cell proliferation in myoblasts by SIX1 is switched to activation through recruitment of EYA3 to the SIX1-DACH1 complex and seems to be dependent on EYA3 phosphatase activity. May be involved in development of the eye. May play a role in mediating the induction and differentiation of cranial placodes. The sequence is that of Protein phosphatase EYA3 (Eya3) from Mus musculus (Mouse).